We begin with the raw amino-acid sequence, 77 residues long: MADVLERVTKIIVDRLGVEETEVVPAASFKEDLGADSLDVVELVMQLEDEFEMEISDEDAEKIATVGDAVTYIESHL.

The region spanning 2 to 77 (ADVLERVTKI…DAVTYIESHL (76 aa)) is the Carrier domain. Serine 37 carries the post-translational modification O-(pantetheine 4'-phosphoryl)serine.

The protein belongs to the acyl carrier protein (ACP) family. 4'-phosphopantetheine is transferred from CoA to a specific serine of apo-ACP by AcpS. This modification is essential for activity because fatty acids are bound in thioester linkage to the sulfhydryl of the prosthetic group.

Its subcellular location is the cytoplasm. The protein operates within lipid metabolism; fatty acid biosynthesis. Its function is as follows. Carrier of the growing fatty acid chain in fatty acid biosynthesis. The chain is Acyl carrier protein from Bacillus anthracis (strain A0248).